The sequence spans 180 residues: Major urinary protein 5 (180 aa).

A signal peptide spans 1 to 18 (MKLLLLLCLELTLVYVHA). Residues cysteine 82 and cysteine 175 are joined by a disulfide bond.

Belongs to the calycin superfamily. Lipocalin family.

The protein localises to the secreted. Major urinary proteins (Mups) bind pheromones, and thus stabilize them to allow slow release into the air from urine marks. May protect pheromones from oxidation. May also act as pheromones themselves. In this context, they play a role in the regulation of social behaviors, such as aggression, mating, pup-suckling, territory establishment and dominance. This Mus musculus (Mouse) protein is Major urinary protein 5.